Reading from the N-terminus, the 394-residue chain is Outer membrane protein S1 (394 aa).

Residues 1 to 21 (MNRKVLALLVPALLVAGAANA) form the signal peptide. Residues 222–242 (SSSDRSDNQVARGYGDGMNER) are disordered.

This sequence belongs to the Gram-negative porin family. Homotrimer.

The protein localises to the cell outer membrane. Forms pores that allow passive diffusion of small molecules across the outer membrane. In Salmonella typhi, this protein is Outer membrane protein S1 (ompS1).